Here is a 224-residue protein sequence, read N- to C-terminus: Peroxiredoxin-6 (224 aa).

The 165-residue stretch at 4-168 (LLLGDEAPNF…ILRVVDSLQL (165 aa)) folds into the Thioredoxin domain. The interval 30–39 (DSWGILFSHP) is required and sufficient for targeting to lysosomes and lamellar bodies. Cysteine 46 serves as the catalytic Cysteine sulfenic acid (-SOH) intermediate; for peroxidase activity. Tyrosine 88 bears the Phosphotyrosine mark. Catalysis depends on aspartate 139, which acts as the For phospholipase activity. Threonine 176 is subject to Phosphothreonine; by MAPK.

The protein belongs to the peroxiredoxin family. Prx6 subfamily. Homodimer. Interacts with GSTP1; mediates PRDX6 glutathionylation and regeneration. Irreversibly inactivated by overoxidation of Cys-46 to sulfinic acid (Cys-SO(2)H) and sulfonic acid (Cys-SO(3)H) forms upon oxidative stress. In terms of processing, phosphorylation at Thr-176 by MAP kinases increases the phospholipase activity of the enzyme. The phosphorylated form exhibits a greater lysophosphatidylcholine acyltransferase activity compared to the non-phosphorylated form.

It is found in the cytoplasm. It localises to the lysosome. It carries out the reaction a hydroperoxide + 2 glutathione = an alcohol + glutathione disulfide + H2O. It catalyses the reaction a 1,2-diacyl-sn-glycero-3-phosphocholine + H2O = a 1-acyl-sn-glycero-3-phosphocholine + a fatty acid + H(+). The catalysed reaction is a 1-acyl-sn-glycero-3-phosphocholine + an acyl-CoA = a 1,2-diacyl-sn-glycero-3-phosphocholine + CoA. The enzyme catalyses 1-hexadecanoyl-sn-glycero-3-phosphocholine + hexadecanoyl-CoA = 1,2-dihexadecanoyl-sn-glycero-3-phosphocholine + CoA. It carries out the reaction 1,2-dihexadecanoyl-sn-glycero-3-phosphocholine + H2O = 1-hexadecanoyl-sn-glycero-3-phosphocholine + hexadecanoate + H(+). Thiol-specific peroxidase that catalyzes the reduction of hydrogen peroxide and organic hydroperoxides to water and alcohols, respectively. Can reduce H(2)O(2) and short chain organic, fatty acid, and phospholipid hydroperoxides. Also has phospholipase activity, and can therefore either reduce the oxidized sn-2 fatty acyl group of phospholipids (peroxidase activity) or hydrolyze the sn-2 ester bond of phospholipids (phospholipase activity). These activities are dependent on binding to phospholipids at acidic pH and to oxidized phospholipds at cytosolic pH. Plays a role in cell protection against oxidative stress by detoxifying peroxides and in phospholipid homeostasis. Exhibits acyl-CoA-dependent lysophospholipid acyltransferase which mediates the conversion of lysophosphatidylcholine (1-acyl-sn-glycero-3-phosphocholine or LPC) into phosphatidylcholine (1,2-diacyl-sn-glycero-3-phosphocholine or PC). Shows a clear preference for LPC as the lysophospholipid and for palmitoyl CoA as the fatty acyl substrate. The chain is Peroxiredoxin-6 (PRDX6) from Gallus gallus (Chicken).